The sequence spans 484 residues: Myosin-binding protein H (484 aa).

The segment at 1 to 78 (MTGKATPEAS…KPEAPSEDVP (78 aa)) is disordered. Threonine 2, threonine 6, and threonine 26 each carry phosphothreonine. The segment covering 41–71 (QEQAPEPQKQPQAQDPAAHEAPATPATTKPE) has biased composition (low complexity). Residues 80 to 175 (APLQLTLEDV…LDQPVHIQEI (96 aa)) form the Fibronectin type-III 1 domain. An Ig-like C2-type 1 domain is found at 179–267 (PKIRVPRHLR…EGLEAKAAID (89 aa)). The Fibronectin type-III 2 domain maps to 276–371 (PPSSIKLLDV…TKELAHIHKA (96 aa)). One can recognise an Ig-like C2-type 2 domain in the interval 389 to 479 (PSFTQPVADR…PAVDCRLEVK (91 aa)).

This sequence belongs to the immunoglobulin superfamily. MyBP family. In terms of tissue distribution, skeletal muscle.

Binds to myosin; probably involved in interaction with thick myofilaments in the A-band. The sequence is that of Myosin-binding protein H (Mybph) from Rattus norvegicus (Rat).